The sequence spans 430 residues: Glucose-6-phosphate isomerase (430 aa).

Residue E284 is the Proton donor of the active site. Catalysis depends on residues H305 and K420.

This sequence belongs to the GPI family.

The protein localises to the cytoplasm. It carries out the reaction alpha-D-glucose 6-phosphate = beta-D-fructose 6-phosphate. The protein operates within carbohydrate biosynthesis; gluconeogenesis. It functions in the pathway carbohydrate degradation; glycolysis; D-glyceraldehyde 3-phosphate and glycerone phosphate from D-glucose: step 2/4. Catalyzes the reversible isomerization of glucose-6-phosphate to fructose-6-phosphate. In Mycoplasmopsis synoviae (strain 53) (Mycoplasma synoviae), this protein is Glucose-6-phosphate isomerase.